We begin with the raw amino-acid sequence, 178 residues long: Peptide deformylase 2 (178 aa).

Fe cation-binding residues include Cys101 and His143. Residue Glu144 is part of the active site. Residue His147 participates in Fe cation binding.

It belongs to the polypeptide deformylase family. Fe(2+) serves as cofactor.

The enzyme catalyses N-terminal N-formyl-L-methionyl-[peptide] + H2O = N-terminal L-methionyl-[peptide] + formate. Its function is as follows. Removes the formyl group from the N-terminal Met of newly synthesized proteins. Requires at least a dipeptide for an efficient rate of reaction. N-terminal L-methionine is a prerequisite for activity but the enzyme has broad specificity at other positions. In Pseudomonas putida (strain ATCC 47054 / DSM 6125 / CFBP 8728 / NCIMB 11950 / KT2440), this protein is Peptide deformylase 2.